Here is a 957-residue protein sequence, read N- to C-terminus: Glycine dehydrogenase (decarboxylating) (957 aa).

An N6-(pyridoxal phosphate)lysine modification is found at Lys708.

This sequence belongs to the GcvP family. The glycine cleavage system is composed of four proteins: P, T, L and H. Pyridoxal 5'-phosphate is required as a cofactor.

It catalyses the reaction N(6)-[(R)-lipoyl]-L-lysyl-[glycine-cleavage complex H protein] + glycine + H(+) = N(6)-[(R)-S(8)-aminomethyldihydrolipoyl]-L-lysyl-[glycine-cleavage complex H protein] + CO2. Functionally, the glycine cleavage system catalyzes the degradation of glycine. The P protein binds the alpha-amino group of glycine through its pyridoxal phosphate cofactor; CO(2) is released and the remaining methylamine moiety is then transferred to the lipoamide cofactor of the H protein. In Escherichia coli (strain K12 / MC4100 / BW2952), this protein is Glycine dehydrogenase (decarboxylating).